Reading from the N-terminus, the 281-residue chain is MGNAKRATQNDEDYTFVSPVVKYLLFFFNMIFWIISLVLISIGVYSRIVKHETALACLTVDPALILMVVGILMFFITFCGCVGSLRENICLLQTFCIFLTIMFLLQLLAGVLGFVFSDKARGKVTDMFDNAIKHYRDDLDLQNLIDYGQKQFNCCGGISFMDWSKNMYFNCSDDNPSRERCSVPFSCCLHAKEETIINTMCGHGMQALNYLAASAFINTNGCIDILVNWIHSNLFLLGGIALGLTIPQLVGILLSQVLINQIQDQIKLQNYNQQHRSDPWS.

The Cytoplasmic portion of the chain corresponds to 1 to 23 (MGNAKRATQNDEDYTFVSPVVKY). The chain crosses the membrane as a helical span at residues 24–44 (LLFFFNMIFWIISLVLISIGV). Residues 45–62 (YSRIVKHETALACLTVDP) lie on the Extracellular side of the membrane. Residues 63-83 (ALILMVVGILMFFITFCGCVG) traverse the membrane as a helical segment. Over 84–94 (SLRENICLLQT) the chain is Cytoplasmic. The helical transmembrane segment at 95–115 (FCIFLTIMFLLQLLAGVLGFV) threads the bilayer. Residues 116–233 (FSDKARGKVT…DILVNWIHSN (118 aa)) are Extracellular-facing. Intrachain disulfides connect C154/C222, C155/C187, C171/C181, and C188/C201. N-linked (GlcNAc...) asparagine glycosylation occurs at N170. Residues 234 to 254 (LFLLGGIALGLTIPQLVGILL) form a helical membrane-spanning segment. Topologically, residues 255 to 281 (SQVLINQIQDQIKLQNYNQQHRSDPWS) are cytoplasmic.

It belongs to the tetraspanin (TM4SF) family. Homodimer; disulfide-linked.

The protein resides in the cell membrane. It is found in the cell junction. The protein localises to the adherens junction. Its subcellular location is the cytoplasm. In terms of biological role, part of TspanC8 subgroup, composed of 6 members that interact with the transmembrane metalloprotease ADAM10. This interaction is required for ADAM10 exit from the endoplasmic reticulum and for enzymatic maturation and trafficking to the cell surface as well as substrate specificity. Different TspanC8/ADAM10 complexes have distinct substrates. The polypeptide is Tetraspanin-33 (tspan33) (Danio rerio (Zebrafish)).